The sequence spans 253 residues: REF/SRPP-like protein OsI_017815 (253 aa).

The interval 1–26 is disordered; it reads MADSGSDAPISNRPEEEVTVEKTPEM. A compositionally biased stretch (basic and acidic residues) spans 13 to 26; it reads RPEEEVTVEKTPEM.

Belongs to the REF/SRPP family.

The sequence is that of REF/SRPP-like protein OsI_017815 from Oryza sativa subsp. indica (Rice).